The sequence spans 124 residues: Ribonuclease pancreatic (124 aa).

The segment covering 1 to 13 has biased composition (basic and acidic residues); sequence KETAAAKFERQHM. The disordered stretch occupies residues 1–22; it reads KETAAAKFERQHMDSSTSAASS. Residues K7 and R10 each coordinate substrate. H12 acts as the Proton acceptor in catalysis. Disulfide bonds link C26–C84, C40–C95, C58–C110, and C65–C72. Residue N34 is glycosylated (N-linked (GlcNAc...) asparagine). Substrate is bound by residues 41–45, K66, and R85; that span reads KPVNT. H119 (proton donor) is an active-site residue.

Belongs to the pancreatic ribonuclease family. In terms of assembly, monomer. Interacts with and forms tight 1:1 complexes with RNH1. Dimerization of two such complexes may occur. Interaction with RNH1 inhibits this protein. As to expression, pancreas.

It is found in the secreted. The catalysed reaction is an [RNA] containing cytidine + H2O = an [RNA]-3'-cytidine-3'-phosphate + a 5'-hydroxy-ribonucleotide-3'-[RNA].. It catalyses the reaction an [RNA] containing uridine + H2O = an [RNA]-3'-uridine-3'-phosphate + a 5'-hydroxy-ribonucleotide-3'-[RNA].. Endonuclease that catalyzes the cleavage of RNA on the 3' side of pyrimidine nucleotides. Acts on single-stranded and double-stranded RNA. The chain is Ribonuclease pancreatic (RNASE1) from Bison bison (American bison).